The sequence spans 494 residues: UPF0371 protein SPT_0390 (494 aa).

It belongs to the UPF0371 family.

In Streptococcus pneumoniae (strain Taiwan19F-14), this protein is UPF0371 protein SPT_0390.